Reading from the N-terminus, the 80-residue chain is HssA/B-like protein 2 (80 aa).

The segment at M1 to G29 is disordered. Over residues S9–G29 the composition is skewed to low complexity.

Belongs to the hssA/B family.

This is HssA/B-like protein 2 (hssl2) from Dictyostelium discoideum (Social amoeba).